A 478-amino-acid polypeptide reads, in one-letter code: Sorting nexin-4 (478 aa).

Over residues 1-10 the composition is skewed to basic and acidic residues; that stretch reads MAVIDQHQDD. The interval 1–56 is disordered; it reads MAVIDQHQDDFSNVSWNTDEHTAAESSSSVTATEFDDTERNGHNAYESDAPGSDGQ. Low complexity predominate over residues 24-33; sequence AESSSSVTAT. The PX domain occupies 58 to 180; sequence VLDCVVSEPL…IFLESPDWNA (123 aa). Residues R101, T103, K127, and R146 each contribute to the a 1,2-diacyl-sn-glycero-3-phospho-(1D-myo-inositol-3-phosphate) site. The disordered stretch occupies residues 459-478; the sequence is EGVSGTRSTGVEPPGRRLAD.

It belongs to the sorting nexin family. In terms of assembly, interacts with the mitochondrial prohibitin complex subunits PHB1 and PHB2; the interaction is direct and plays a role in mitophagy.

The protein resides in the cytoplasm. Its subcellular location is the cytosol. It localises to the preautophagosomal structure membrane. It is found in the endosome membrane. The protein localises to the mitochondrion membrane. The protein resides in the lipid droplet. Functionally, sorting nexin, involved in the separation or division of vacuoles throughout the entire life cycle of the cells. Involved in retrieval of late-Golgi SNAREs from post-Golgi endosomes to the trans-Golgi network, for cytoplasm to vacuole transport (Cvt), and autophagy of large cargos including mitophagy, pexophagy and glycophagy. Required for the switch to necrotrophic growth. The protein is Sorting nexin-4 of Colletotrichum higginsianum (strain IMI 349063) (Crucifer anthracnose fungus).